Here is a 459-residue protein sequence, read N- to C-terminus: Interleukin-1 receptor-associated kinase 4 (459 aa).

N-acetylmethionine is present on Met-1. The region spanning 20–104 is the Death domain; sequence RKLSDFIDPQ…APATLLLPDA (85 aa). Lys-34 is modified (N6-acetyllysine). Residues 115–161 form a disordered region; the sequence is REAATVAQTHGPCQEKDRTSVMPMPKLEHSCEPPDSSSPDNRSVESS. The region spanning 186-454 is the Protein kinase domain; the sequence is SAGGNRMGEG…PDIAKVQQLL (269 aa). Residues 192 to 200 and Lys-213 contribute to the ATP site; that span reads MGEGGFGVV. Asp-311 acts as the Proton acceptor in catalysis. Residues 313–316 and Asp-329 each bind ATP; that span reads KSAN. A phosphothreonine mark is found at Thr-342 and Thr-345. Ser-346 carries the post-translational modification Phosphoserine.

It belongs to the protein kinase superfamily. TKL Ser/Thr protein kinase family. Pelle subfamily. As to quaternary structure, associates with MYD88 and IRAK2 to form a ternary complex called the Myddosome. Once phosphorylated, IRAK4 dissociates from the receptor complex and then associates with the TNF receptor-associated factor 6 (TRAF6), IRAK1, and PELI1; this intermediate complex is required for subsequent NF-kappa-B activation. Direct binding of SMAD6 to PELI1 prevents complex formation and hence negatively regulates IL1R-TLR signaling and eventually NF-kappa-B-mediated gene expression. Interacts with IL1RL1. Interacts (when phosphorylated) with IRAK1. May interact (when phosphorylated) with IRAK3. It depends on Mg(2+) as a cofactor. Post-translationally, phosphorylated.

It localises to the cytoplasm. It catalyses the reaction L-seryl-[protein] + ATP = O-phospho-L-seryl-[protein] + ADP + H(+). It carries out the reaction L-threonyl-[protein] + ATP = O-phospho-L-threonyl-[protein] + ADP + H(+). Functionally, serine/threonine-protein kinase that plays a critical role in initiating innate immune response against foreign pathogens. Involved in Toll-like receptor (TLR) and IL-1R signaling pathways. Is rapidly recruited by MYD88 to the receptor-signaling complex upon TLR activation to form the Myddosome together with IRAK2. Phosphorylates initially IRAK1, thus stimulating the kinase activity and intensive autophosphorylation of IRAK1. Phosphorylates E3 ubiquitin ligases Pellino proteins (PELI1, PELI2 and PELI3) to promote pellino-mediated polyubiquitination of IRAK1. Then, the ubiquitin-binding domain of IKBKG/NEMO binds to polyubiquitinated IRAK1 bringing together the IRAK1-MAP3K7/TAK1-TRAF6 complex and the NEMO-IKKA-IKKB complex. In turn, MAP3K7/TAK1 activates IKKs (CHUK/IKKA and IKBKB/IKKB) leading to NF-kappa-B nuclear translocation and activation. Alternatively, phosphorylates TIRAP to promote its ubiquitination and subsequent degradation. Phosphorylates NCF1 and regulates NADPH oxidase activation after LPS stimulation suggesting a similar mechanism during microbial infections. The polypeptide is Interleukin-1 receptor-associated kinase 4 (Irak4) (Mus musculus (Mouse)).